The primary structure comprises 406 residues: Ubiquitin-like modifier-activating enzyme 5 (406 aa).

ATP-binding residues include G82, D103, K126, N149, and N183. Zn(2+)-binding residues include C225 and C228. C249 serves as the catalytic Glycyl thioester intermediate. Residues C302 and C307 each contribute to the Zn(2+) site. The tract at residues 373–397 is disordered; it reads EAPSKSTETTSEATTTTTGDETSLD. Over residues 378 to 393 the composition is skewed to low complexity; sequence STETTSEATTTTTGDE.

The protein belongs to the ubiquitin-activating E1 family. UBA5 subfamily.

E1-like enzyme which activates UFM1. This is Ubiquitin-like modifier-activating enzyme 5 from Drosophila willistoni (Fruit fly).